Consider the following 155-residue polypeptide: uncharacterized protein (155 aa).

This is an uncharacterized protein from Acanthamoeba polyphaga (Amoeba).